The chain runs to 210 residues: Transcriptional regulator MxiE (210 aa).

Positions 99–199 (YHLVLYLLRT…GFSARELSNI (101 aa)) constitute an HTH araC/xylS-type domain. 2 DNA-binding regions (H-T-H motif) span residues 118–139 (KSLT…RKAL) and 166–189 (ITSA…KTRL).

In terms of biological role, necessary for the secretion of ipa invasins. Probable transcriptional regulatory protein. The protein is Transcriptional regulator MxiE (mxiE) of Shigella flexneri.